The primary structure comprises 498 residues: Glutamyl-tRNA(Gln) amidotransferase subunit A (498 aa).

Residues K85 and S160 each act as charge relay system in the active site. Catalysis depends on S184, which acts as the Acyl-ester intermediate.

This sequence belongs to the amidase family. GatA subfamily. Heterotrimer of A, B and C subunits.

The catalysed reaction is L-glutamyl-tRNA(Gln) + L-glutamine + ATP + H2O = L-glutaminyl-tRNA(Gln) + L-glutamate + ADP + phosphate + H(+). Functionally, allows the formation of correctly charged Gln-tRNA(Gln) through the transamidation of misacylated Glu-tRNA(Gln) in organisms which lack glutaminyl-tRNA synthetase. The reaction takes place in the presence of glutamine and ATP through an activated gamma-phospho-Glu-tRNA(Gln). The protein is Glutamyl-tRNA(Gln) amidotransferase subunit A of Mycolicibacterium vanbaalenii (strain DSM 7251 / JCM 13017 / BCRC 16820 / KCTC 9966 / NRRL B-24157 / PYR-1) (Mycobacterium vanbaalenii).